The following is a 932-amino-acid chain: DNA mismatch repair protein MutS (932 aa).

620-627 (GPNMAGKS) contacts ATP.

The protein belongs to the DNA mismatch repair MutS family.

Functionally, this protein is involved in the repair of mismatches in DNA. It is possible that it carries out the mismatch recognition step. This protein has a weak ATPase activity. The chain is DNA mismatch repair protein MutS from Lachnoclostridium phytofermentans (strain ATCC 700394 / DSM 18823 / ISDg) (Clostridium phytofermentans).